A 358-amino-acid chain; its full sequence is Alanine racemase (358 aa).

The Proton acceptor; specific for D-alanine role is filled by Lys-34. Lys-34 is modified (N6-(pyridoxal phosphate)lysine). A substrate-binding site is contributed by Arg-129. Catalysis depends on Tyr-254, which acts as the Proton acceptor; specific for L-alanine. Met-302 contacts substrate.

This sequence belongs to the alanine racemase family. The cofactor is pyridoxal 5'-phosphate.

It carries out the reaction L-alanine = D-alanine. The protein operates within amino-acid biosynthesis; D-alanine biosynthesis; D-alanine from L-alanine: step 1/1. In terms of biological role, catalyzes the interconversion of L-alanine and D-alanine. May also act on other amino acids. This is Alanine racemase (alr) from Vibrio parahaemolyticus serotype O3:K6 (strain RIMD 2210633).